The sequence spans 221 residues: Transcription factor HES-4 (221 aa).

Low complexity predominate over residues M1–S22. Residues M1–R49 form a disordered region. The span at T24–R35 shows a compositional bias: basic and acidic residues. Positions H34–L91 constitute a bHLH domain. The Orange domain maps to Y110–L143. Residues L201–R221 form a disordered region. The WRPW motif signature appears at W216–W219.

As to quaternary structure, transcription repression requires formation of a complex with a corepressor protein of the Groucho/TLE family.

The protein localises to the nucleus. In terms of biological role, transcriptional repressor. Binds DNA on N-box motifs: 5'-CACNAG-3'. This Homo sapiens (Human) protein is Transcription factor HES-4 (HES4).